The primary structure comprises 542 residues: CTP synthase (542 aa).

An amidoligase domain region spans residues 1 to 265 (MTKFVFVTGG…DEIVCHKLNL (265 aa)). Ser13 serves as a coordination point for CTP. Ser13 lines the UTP pocket. ATP-binding positions include 14–19 (SLGKGI) and Asp71. Residues Asp71 and Glu139 each contribute to the Mg(2+) site. CTP contacts are provided by residues 146 to 148 (DIE), 186 to 191 (KTKPTQ), and Lys222. UTP contacts are provided by residues 186–191 (KTKPTQ) and Lys222. One can recognise a Glutamine amidotransferase type-1 domain in the interval 290 to 542 (NVAFVGKYVD…IAAALANRKA (253 aa)). L-glutamine is bound at residue Gly351. Cys378 acts as the Nucleophile; for glutamine hydrolysis in catalysis. L-glutamine is bound by residues 379–382 (LGMQ), Glu402, and Arg468. Catalysis depends on residues His515 and Glu517.

It belongs to the CTP synthase family. Homotetramer.

The enzyme catalyses UTP + L-glutamine + ATP + H2O = CTP + L-glutamate + ADP + phosphate + 2 H(+). It carries out the reaction L-glutamine + H2O = L-glutamate + NH4(+). The catalysed reaction is UTP + NH4(+) + ATP = CTP + ADP + phosphate + 2 H(+). The protein operates within pyrimidine metabolism; CTP biosynthesis via de novo pathway; CTP from UDP: step 2/2. With respect to regulation, allosterically activated by GTP, when glutamine is the substrate; GTP has no effect on the reaction when ammonia is the substrate. The allosteric effector GTP functions by stabilizing the protein conformation that binds the tetrahedral intermediate(s) formed during glutamine hydrolysis. Inhibited by the product CTP, via allosteric rather than competitive inhibition. Its function is as follows. Catalyzes the ATP-dependent amination of UTP to CTP with either L-glutamine or ammonia as the source of nitrogen. Regulates intracellular CTP levels through interactions with the four ribonucleotide triphosphates. The protein is CTP synthase of Methylobacillus flagellatus (strain ATCC 51484 / DSM 6875 / VKM B-1610 / KT).